The chain runs to 351 residues: Probable protein phosphatase 2C 8 (351 aa).

Residues 1 to 63 (MLEKESDLTA…REAEEDKPSF (63 aa)) are disordered. Residues 54–63 (REAEEDKPSF) are compositionally biased toward basic and acidic residues. The PPM-type phosphatase domain maps to 74-348 (EADVAEDKGA…DNCTAIVIVF (275 aa)). Mn(2+) contacts are provided by Asp114, Gly115, Asp295, and Asp339.

The protein belongs to the PP2C family. Mg(2+) serves as cofactor. It depends on Mn(2+) as a cofactor.

The catalysed reaction is O-phospho-L-seryl-[protein] + H2O = L-seryl-[protein] + phosphate. It carries out the reaction O-phospho-L-threonyl-[protein] + H2O = L-threonyl-[protein] + phosphate. This chain is Probable protein phosphatase 2C 8, found in Arabidopsis thaliana (Mouse-ear cress).